Reading from the N-terminus, the 386-residue chain is Phosphoglycerate kinase (386 aa).

Substrate contacts are provided by residues 21–23, R36, 59–62, R112, and R145; these read DLN and HLGR. Residues K196, E313, and 339-342 each bind ATP; that span reads GGDT.

The protein belongs to the phosphoglycerate kinase family. Monomer.

The protein resides in the cytoplasm. The enzyme catalyses (2R)-3-phosphoglycerate + ATP = (2R)-3-phospho-glyceroyl phosphate + ADP. Its pathway is carbohydrate degradation; glycolysis; pyruvate from D-glyceraldehyde 3-phosphate: step 2/5. In Haemophilus influenzae (strain PittEE), this protein is Phosphoglycerate kinase.